Reading from the N-terminus, the 191-residue chain is Small ribosomal subunit protein uS11m (191 aa).

Positions 37 to 62 (PRLEDSAARQNTEREAAPSRFSLYPP) are disordered. Positions 38–53 (RLEDSAARQNTEREAA) are enriched in basic and acidic residues.

The protein belongs to the universal ribosomal protein uS11 family. As to quaternary structure, component of the mitochondrial ribosome small subunit (28S) which comprises a 12S rRNA and about 30 distinct proteins.

It is found in the mitochondrion. This chain is Small ribosomal subunit protein uS11m (Mrps11), found in Mus musculus (Mouse).